A 567-amino-acid polypeptide reads, in one-letter code: Type II secretion system protein E (567 aa).

325–332 is a binding site for ATP; sequence GPTGSGKT.

The protein belongs to the GSP E family. Forms homooligomers; most probably hexamers. Interacts with XpsL/GspL.

It is found in the cell inner membrane. It carries out the reaction ATP + H2O + cellular proteinSide 1 = ADP + phosphate + cellular proteinSide 2.. Functionally, ATPase component of the type II secretion system required for the energy-dependent secretion of extracellular factors such as proteases and toxins from the periplasm. Acts as a molecular motor to provide the energy that is required for assembly of the pseudopilus and the extrusion of substrates generated in the cytoplasm. The polypeptide is Type II secretion system protein E (xpsE) (Xanthomonas campestris pv. campestris (strain ATCC 33913 / DSM 3586 / NCPPB 528 / LMG 568 / P 25)).